Reading from the N-terminus, the 214-residue chain is Cytochrome b (214 aa).

Helical transmembrane passes span 31–51, 75–96, 111–131, and 176–196; these read FGSMLLICLMLQTLTGFFLAI, WTMQNLHAISASLFFICIYIHI, WLSGVTLLFTLMATAFFGYVL, and FFALHFILPFIIISLSSAHIM. 2 residues coordinate heme b: His-81 and His-95. Residues His-180 and His-194 each coordinate heme b. Residue His-199 participates in a ubiquinone binding.

Belongs to the cytochrome b family. In terms of assembly, the cytochrome bc1 complex contains 3 respiratory subunits (MT-CYB, CYC1 and UQCRFS1), 2 core proteins (UQCRC1 and UQCRC2) and probably 6 low-molecular weight proteins. Heme b serves as cofactor.

Its subcellular location is the mitochondrion inner membrane. In terms of biological role, component of the ubiquinol-cytochrome c reductase complex (complex III or cytochrome b-c1 complex) that is part of the mitochondrial respiratory chain. The b-c1 complex mediates electron transfer from ubiquinol to cytochrome c. Contributes to the generation of a proton gradient across the mitochondrial membrane that is then used for ATP synthesis. This Elapsoidea semiannulata (Angolan garter snake) protein is Cytochrome b (MT-CYB).